The chain runs to 85 residues: Phosphocarrier protein HPr (85 aa).

The HPr domain occupies 1 to 85 (MYSKDVEIIA…HLVALIPTLE (85 aa)). H15 functions as the Pros-phosphohistidine intermediate in the catalytic mechanism.

This sequence belongs to the HPr family.

It is found in the cytoplasm. General (non sugar-specific) component of the phosphoenolpyruvate-dependent sugar phosphotransferase system (sugar PTS). This major carbohydrate active-transport system catalyzes the phosphorylation of incoming sugar substrates concomitantly with their translocation across the cell membrane. The phosphoryl group from phosphoenolpyruvate (PEP) is transferred to the phosphoryl carrier protein HPr by enzyme I. Phospho-HPr then transfers it to the PTS EIIA domain. The protein is Phosphocarrier protein HPr (ptsH) of Haemophilus influenzae (strain ATCC 51907 / DSM 11121 / KW20 / Rd).